A 348-amino-acid chain; its full sequence is Phospho-N-acetylmuramoyl-pentapeptide-transferase (348 aa).

A run of 10 helical transmembrane segments spans residues 11–31, 67–87, 92–112, 128–148, 163–183, 198–218, 222–242, 251–271, 276–296, and 326–346; these read SLILFLVTVMGFAFLVGIFLG, TAGGVLFFLVLLMSIFFLLPL, TWLFVFSIVSWGSLGWYDDIV, FIVQLLLSAVTVITVFFIDKE, IFLGSSILAKLFCFSLAMLAI, GLATGITCMSSFGLLIVAIMS, PLAYDVSIVLATLVGISLAFL, VFMGDTGSLLIGGILASCAVM, LFLIFLGGVFVAEAGSVILQV, and VVARFWMAGLLCTVLGIVAAL.

The protein belongs to the glycosyltransferase 4 family. MraY subfamily. Mg(2+) serves as cofactor.

The protein localises to the cell inner membrane. It carries out the reaction UDP-N-acetyl-alpha-D-muramoyl-L-alanyl-gamma-D-glutamyl-meso-2,6-diaminopimeloyl-D-alanyl-D-alanine + di-trans,octa-cis-undecaprenyl phosphate = di-trans,octa-cis-undecaprenyl diphospho-N-acetyl-alpha-D-muramoyl-L-alanyl-D-glutamyl-meso-2,6-diaminopimeloyl-D-alanyl-D-alanine + UMP. It participates in cell wall biogenesis; peptidoglycan biosynthesis. Its function is as follows. Catalyzes the initial step of the lipid cycle reactions in the biosynthesis of the cell wall peptidoglycan: transfers peptidoglycan precursor phospho-MurNAc-pentapeptide from UDP-MurNAc-pentapeptide onto the lipid carrier undecaprenyl phosphate, yielding undecaprenyl-pyrophosphoryl-MurNAc-pentapeptide, known as lipid I. The chain is Phospho-N-acetylmuramoyl-pentapeptide-transferase from Chlamydia felis (strain Fe/C-56) (Chlamydophila felis).